Consider the following 248-residue polypeptide: Inner membrane protein pE248R (248 aa).

The N-myristoyl glycine; by host moiety is linked to residue Gly-2. Topologically, residues 2 to 199 (GGSTSKNSFK…ADAISAVFKN (198 aa)) are cytoplasmic. A helical transmembrane segment spans residues 200–220 (IMVAAVVIVLIIVGFIAVFYF). At 221–248 (LHSRHRHEEEEEAEPLISNKVLKNAAVS) the chain is on the extracellular side.

Belongs to the asfivirus E248R family. As to quaternary structure, interacts with A151R.

The protein resides in the host membrane. The protein localises to the virion membrane. Functionally, essential for viral fusion with host endosomal membrane and core release. The chain is Inner membrane protein pE248R from Ornithodoros (relapsing fever ticks).